The primary structure comprises 286 residues: Glycine--tRNA ligase alpha subunit (286 aa).

It belongs to the class-II aminoacyl-tRNA synthetase family. Tetramer of two alpha and two beta subunits.

The protein localises to the cytoplasm. It carries out the reaction tRNA(Gly) + glycine + ATP = glycyl-tRNA(Gly) + AMP + diphosphate. The polypeptide is Glycine--tRNA ligase alpha subunit (Campylobacter lari (strain RM2100 / D67 / ATCC BAA-1060)).